The sequence spans 247 residues: uncharacterized protein (247 aa).

The next 6 membrane-spanning stretches (helical) occupy residues 19-39 (IFFTFLLCFIICTIYSESIMF), 73-93 (FFTSIYCTFPYFFYQFWAFFI), 106-126 (FLSFFFFTLLFFSCIIIYFII), 155-175 (YIQFTFQIFSYFFVLFQCPLF), 196-216 (YIYFLFLILAAFLSPPDILSQ), and 217-237 (FFLFSLIVFMYELCVFYSCFY).

It belongs to the TatC family.

Its subcellular location is the mitochondrion membrane. This is an uncharacterized protein from Nephroselmis olivacea (Green alga).